We begin with the raw amino-acid sequence, 313 residues long: Methionyl-tRNA formyltransferase (313 aa).

Positions 32-51 (QPDRRKGRGKELQPPPAKRK) are disordered. Residue 109-112 (SLLP) participates in (6S)-5,6,7,8-tetrahydrofolate binding.

This sequence belongs to the Fmt family.

The enzyme catalyses L-methionyl-tRNA(fMet) + (6R)-10-formyltetrahydrofolate = N-formyl-L-methionyl-tRNA(fMet) + (6S)-5,6,7,8-tetrahydrofolate + H(+). Its function is as follows. Attaches a formyl group to the free amino group of methionyl-tRNA(fMet). The formyl group appears to play a dual role in the initiator identity of N-formylmethionyl-tRNA by promoting its recognition by IF2 and preventing the misappropriation of this tRNA by the elongation apparatus. This chain is Methionyl-tRNA formyltransferase, found in Natranaerobius thermophilus (strain ATCC BAA-1301 / DSM 18059 / JW/NM-WN-LF).